Consider the following 307-residue polypeptide: Acyl transferase (307 aa).

Active-site charge relay system residues include Ser-116, Asp-213, and His-243.

This sequence belongs to the LuxD family.

It functions in the pathway lipid metabolism; fatty acid reduction for biolumincescence. In terms of biological role, acyl transferase is part of the fatty acid reductase system required for aldehyde biosynthesis; it produces fatty acids for the luminescent reaction. The polypeptide is Acyl transferase (Aliivibrio fischeri (strain ATCC 700601 / ES114) (Vibrio fischeri)).